Consider the following 375-residue polypeptide: Actin, cytoplasmic (375 aa).

The protein belongs to the actin family.

The protein resides in the cytoplasm. Its subcellular location is the cytoskeleton. The catalysed reaction is ATP + H2O = ADP + phosphate + H(+). In terms of biological role, actins are highly conserved proteins that are involved in various types of cell motility and are ubiquitously expressed in all eukaryotic cells. The sequence is that of Actin, cytoplasmic from Oxytricha trifallax (Sterkiella histriomuscorum).